Reading from the N-terminus, the 128-residue chain is Large ribosomal subunit protein bL17 (128 aa).

Belongs to the bacterial ribosomal protein bL17 family. As to quaternary structure, part of the 50S ribosomal subunit. Contacts protein L32.

This is Large ribosomal subunit protein bL17 from Erwinia tasmaniensis (strain DSM 17950 / CFBP 7177 / CIP 109463 / NCPPB 4357 / Et1/99).